Here is a 470-residue protein sequence, read N- to C-terminus: Uronate isomerase (470 aa).

This sequence belongs to the metallo-dependent hydrolases superfamily. Uronate isomerase family.

The catalysed reaction is D-glucuronate = D-fructuronate. It catalyses the reaction aldehydo-D-galacturonate = keto-D-tagaturonate. Its pathway is carbohydrate metabolism; pentose and glucuronate interconversion. The chain is Uronate isomerase from Serratia proteamaculans (strain 568).